The sequence spans 89 residues: MSLNAEQKSEIVEQFRRSPSDTGSPEVQIALLSARIQHLTEHFSVHKQDHHSRQGLLKLVSQRRKLLDYLKRKDRGRYQDVIERLGIRK.

The interval 1-24 (MSLNAEQKSEIVEQFRRSPSDTGS) is disordered. Over residues 7–19 (QKSEIVEQFRRSP) the composition is skewed to basic and acidic residues.

Belongs to the universal ribosomal protein uS15 family. In terms of assembly, part of the 30S ribosomal subunit. Forms a bridge to the 50S subunit in the 70S ribosome, contacting the 23S rRNA.

One of the primary rRNA binding proteins, it binds directly to 16S rRNA where it helps nucleate assembly of the platform of the 30S subunit by binding and bridging several RNA helices of the 16S rRNA. Its function is as follows. Forms an intersubunit bridge (bridge B4) with the 23S rRNA of the 50S subunit in the ribosome. This chain is Small ribosomal subunit protein uS15, found in Halorhodospira halophila (strain DSM 244 / SL1) (Ectothiorhodospira halophila (strain DSM 244 / SL1)).